A 473-amino-acid chain; its full sequence is FAD-dependent oxidoreductase dpasF (473 aa).

The first 21 residues, 1-21 (MNRLLASALLVGSAVVAPVSA), serve as a signal peptide directing secretion. N26, N54, N92, N133, N185, N276, and N401 each carry an N-linked (GlcNAc...) asparagine glycan.

The protein belongs to the beta-cyclopiazonate dehydrogenase family. It depends on FAD as a cofactor.

Its pathway is secondary metabolite biosynthesis; terpenoid biosynthesis. Its function is as follows. FAD-dependent oxidoreductase; part of the gene cluster that mediates the biosynthesis of the diterpenoid pyrones subglutinols A and B. The first step of the pathway is the synthesis of the alpha-pyrone moiety by the polyketide synthase dpasA via condensation of one acetyl-CoA starter unit with 3 malonyl-CoA units and 2 methylations. The alpha-pyrone is then combined with geranylgeranyl pyrophosphate (GGPP) formed by the GGPP synthase dpasD through the action of the prenyltransferase dpasC to yield a linear alpha-pyrone diterpenoid. Subsequent steps in the diterpenoid pyrone biosynthetic pathway involve the decalin core formation, which is initiated by the epoxidation of the C10-C11 olefin by the FAD-dependent oxidoreductase dpasE, and is followed by a cyclization cascade catalyzed by the terpene cyclase dpasB. The FAD-linked oxidoreductase dpasF is then involved in tetrahydrofuran (THF) ring formation at the C5 unit to complete the formation of subglutinols A and B. DpasF possesses also an additional catalytic ability of multi-step oxidations to generate a new DDP analog with an enone system at the C5 named FDDP A. In Apiospora sacchari (Arthrinium sacchari), this protein is FAD-dependent oxidoreductase dpasF.